Consider the following 513-residue polypeptide: Histone acetyltransferase KAT5 (513 aa).

The Tudor-knot domain occupies 8 to 65 (IEGCRLPVLRRNQDNEDEWPLAEILSVKDISGRKLFYVHYIDFNKRLDEWVTHERLDL). K52 carries the post-translational modification N6-acetyllysine. The interval 69–106 (QFPKKEAKTPTKNGLPGSRPGSPEREVPASAQASGKTL) is disordered. S86 carries the post-translational modification Phosphoserine; by GSK3. S90 is subject to Phosphoserine; by CDK1 and CDK9. N6-acetyllysine; by autocatalysis occurs at positions 104 and 120. Positions 122–220 (REAIPGGEPD…RMTGSLVSDR (99 aa)) are disordered. Residues 133 to 144 (PLSSSSCLQPNH) show a composition bias toward polar residues. 4 positions are modified to N6-acetyllysine; by autocatalysis: K148, K150, K187, and K189. A Phosphoserine modification is found at S199. The MYST-type HAT domain maps to 227–504 (TRMKNIECIE…IDSKCLHFTP (278 aa)). The segment at 260–285 (LYLCEFCLKYGRSLKCLQRHLTKCDL) adopts a C2HC MYST-type zinc-finger fold. An N6-acetyllysine; by autocatalysis modification is found at K327. The segment at 368-513 (ACILTLPPYQ…PKDWSKRGKW (146 aa)) is interaction with ATF2. Acetyl-CoA contacts are provided by residues 370-372 (ILT) and 377-383 (QRRGYGK). The active-site Proton donor/acceptor is E403. Acetyl-CoA contacts are provided by S407 and S416. Residue K430 forms a Glycyl lysine isopeptide (Lys-Gly) (interchain with G-Cter in SUMO1); alternate linkage. Residue K430 forms a Glycyl lysine isopeptide (Lys-Gly) (interchain with G-Cter in SUMO2); alternate linkage. K451 participates in a covalent cross-link: Glycyl lysine isopeptide (Lys-Gly) (interchain with G-Cter in SUMO1).

It belongs to the MYST (SAS/MOZ) family. Component of the NuA4 histone acetyltransferase complex which contains the catalytic subunit KAT5/TIP60 and the subunits EP400, TRRAP/PAF400, BRD8/SMAP, EPC1, DMAP1/DNMAP1, RUVBL1/TIP49, RUVBL2, ING3, actin, ACTL6A/BAF53A, MORF4L1/MRG15, MORF4L2/MRGX, MRGBP, YEATS4/GAS41, VPS72/YL1 and MEAF6. KAT5/TIP60, EPC1, and ING3 together constitute a minimal HAT complex termed Piccolo NuA4. The NuA4 complex interacts with MYC. Interacts with ATM. Interacts with JADE1. Interacts with PLA2G4A/CPLA2, EDNRA and HDAC7. Interacts with the cytoplasmic tail of APP and APBB1/FE65. Interacts with TRIM24 and TRIM68. Forms a complex with SENP6 and UBE2I in response to UV irradiation. Identified in a complex with HINT1. Interacts with ATF2 and CUL3. Interacts with NR1D2 (via N-terminus). Component of a SWR1-like complex. Interacts with FOXP3. Interacts with ZBTB49. Interacts with SRF. Interacts with ATF3; promoting autoacetylation and deubiquitination by USP7. Interacts with EP300/p300; interaction promotes KAT5 autoacetylation. Interacts with PRKDC; interaction is impaired following KAT5 sumoylation. Interacts with GPR50. Interacts with NME3; this interaction enables recruitment of NME3 at DNA damage sites where it plays a role in the repair of DNA. As to quaternary structure, (Microbial infection) Interacts with HIV-1 TAT. In terms of processing, phosphorylated on Ser-86 and Ser-90; enhanced during G2/M phase. The phosphorylated form has a higher activity. Phosphorylation at Ser-90 by CDK1 or CDK9 is a prerequisite for phosphorylation at Ser-86 by GSK3. Phosphorylation at Ser-86 by GSK3 (GSK3A or GSK3B) activates acetyltransferase and acyltransferase activities. Phosphorylation at Ser-90 by CDK9 promotes KAT5 recruitment to chromatin. Phosphorylation by VRK1 following DNA damage promotes KAT5 association with chromatin and histone acetyltransferase activity. Autoacetylated. Autoacetylation is required for histone acetyltransferase activity. Autoacetylation at Lys-327 is facilitated by interaction with EP300/p300: it prevents ubiquitination and subsequent degradation by the proteasome and promotes acetylation of target proteins. Deacetylated by HDAC3 and SIRT1. Deacetylation by HDAC3 promotes its ubiquitination and cytoplasmic localization. Post-translationally, sumoylated by UBE2I at Lys-430 and Lys-451, leading to increase of its histone acetyltransferase activity in UV-induced DNA damage response, as well as its translocation to nuclear bodies. Sumoylation with SUMO2 by PIAS4 at Lys-430 promotes repair of DNA double-strand breaks (DSBs) via homologous recombination (HR). Sumoylation by PIAS4 impairs interaction with PRKDC, inhibiting non-homologous end joining (NHEJ)-mediated repair of DSBs, thereby facilitating HR. Desumoylated by SENP3. In terms of processing, ubiquitinated by MDM2, leading to its proteasome-dependent degradation. Ubiquitination is prevented by autoacetylation at Lys-327. Ubiquitinated following deacetylation by HDAC3, leading to cytoplasmic localization. Deubiquitinated by USP7 following interaction with ATF3, promoting its stabilization. (Microbial infection) In case of HIV-1 infection, interaction with the viral Tat protein leads to KAT5 polyubiquitination and targets it to degradation.

Its subcellular location is the nucleus. It localises to the chromosome. The protein resides in the cytoplasm. It is found in the centromere. The protein localises to the kinetochore. Its subcellular location is the cytoskeleton. It localises to the spindle pole. The protein resides in the nucleolus. It is found in the perinuclear region. The catalysed reaction is L-lysyl-[histone] + acetyl-CoA = N(6)-acetyl-L-lysyl-[histone] + CoA + H(+). It carries out the reaction L-lysyl-[protein] + acetyl-CoA = N(6)-acetyl-L-lysyl-[protein] + CoA + H(+). The enzyme catalyses (2E)-butenoyl-CoA + L-lysyl-[protein] = N(6)-(2E)-butenoyl-L-lysyl-[protein] + CoA + H(+). It catalyses the reaction 2-hydroxyisobutanoyl-CoA + L-lysyl-[protein] = N(6)-(2-hydroxyisobutanoyl)-L-lysyl-[protein] + CoA + H(+). The catalysed reaction is (S)-lactoyl-CoA + L-lysyl-[protein] = N(6)-[(S)-lactoyl]-L-lysyl-[protein] + CoA + H(+). With respect to regulation, acyltransferase and acetyltransferase activities are activated by phosphorylation and autoacetylation. Autoacetylation activates the histone acetyltransferase activity. Its function is as follows. Catalytic subunit of the NuA4 histone acetyltransferase complex, a multiprotein complex involved in transcriptional activation of select genes principally by acetylation of nucleosomal histones H2A and H4. Histone acetylation alters nucleosome-DNA interactions and promotes interaction of the modified histones with other proteins which positively regulate transcription. The NuA4 histone acetyltransferase complex is required for the activation of transcriptional programs associated with proto-oncogene mediated growth induction, tumor suppressor mediated growth arrest and replicative senescence, apoptosis, and DNA repair. The NuA4 complex plays a direct role in repair of DNA double-strand breaks (DSBs) by promoting homologous recombination (HR): the complex inhibits TP53BP1 binding to chromatin via MBTD1, which recognizes and binds histone H4 trimethylated at 'Lys-20' (H4K20me), and KAT5 that catalyzes acetylation of 'Lys-15' of histone H2A (H2AK15ac), thereby blocking the ubiquitination mark required for TP53BP1 localization at DNA breaks. Also involved in DSB repair by mediating acetylation of 'Lys-5' of histone H2AX (H2AXK5ac), promoting NBN/NBS1 assembly at the sites of DNA damage. The NuA4 complex plays a key role in hematopoietic stem cell maintenance and is required to maintain acetylated H2A.Z/H2AZ1 at MYC target genes. The NuA4 complex is also required for spermatid development by promoting acetylation of histones: histone hyperacetylation is required for histone replacement during the transition from round to elongating spermatids. Component of a SWR1-like complex that specifically mediates the removal of histone H2A.Z/H2AZ1 from the nucleosome. Also acetylates non-histone proteins, such as BMAL1, ATM, AURKB, CHKA, CGAS, ERCC4/XPF, LPIN1, TP53/p53, NDC80/HEC1, NR1D2, RAN, SOX4, FOXP3, SQSTM1, ULK1 and RUBCNL/Pacer. Directly acetylates and activates ATM. Promotes nucleotide excision repair (NER) by mediating acetylation of ERCC4/XPF, thereby promoting formation of the ERCC4-ERCC1 complex. Relieves NR1D2-mediated inhibition of APOC3 expression by acetylating NR1D2. Acts as a regulator of regulatory T-cells (Treg) by catalyzing FOXP3 acetylation, thereby promoting FOXP3 transcriptional repressor activity. Involved in skeletal myoblast differentiation by mediating acetylation of SOX4. Catalyzes acetylation of APBB1/FE65, increasing its transcription activator activity. Promotes transcription elongation during the activation phase of the circadian cycle by catalyzing acetylation of BMAL1, promoting elongation of circadian transcripts. Together with GSK3 (GSK3A or GSK3B), acts as a regulator of autophagy: phosphorylated at Ser-86 by GSK3 under starvation conditions, leading to activate acetyltransferase activity and promote acetylation of key autophagy regulators, such as ULK1 and RUBCNL/Pacer. Acts as a regulator of the cGAS-STING innate antiviral response by catalyzing acetylation the N-terminus of CGAS, thereby promoting CGAS DNA-binding and activation. Also regulates lipid metabolism by mediating acetylation of CHKA or LPIN1. Promotes lipolysis of lipid droplets following glucose deprivation by mediating acetylation of isoform 1 of CHKA, thereby promoting monomerization of CHKA and its conversion into a tyrosine-protein kinase. Acts as a regulator of fatty-acid-induced triacylglycerol synthesis by catalyzing acetylation of LPIN1, thereby promoting the synthesis of diacylglycerol. In addition to protein acetyltransferase, can use different acyl-CoA substrates, such as (2E)-butenoyl-CoA (crotonyl-CoA), S-lactoyl-CoA (lactyl-CoA) and 2-hydroxyisobutanoyl-CoA (2-hydroxyisobutyryl-CoA), and is able to mediate protein crotonylation, lactylation and 2-hydroxyisobutyrylation, respectively. Acts as a key regulator of chromosome segregation and kinetochore-microtubule attachment during mitosis by mediating acetylation or crotonylation of target proteins. Catalyzes acetylation of AURKB at kinetochores, increasing AURKB activity and promoting accurate chromosome segregation in mitosis. Acetylates RAN during mitosis, promoting microtubule assembly at mitotic chromosomes. Acetylates NDC80/HEC1 during mitosis, promoting robust kinetochore-microtubule attachment. Catalyzes crotonylation of MAPRE1/EB1, thereby ensuring accurate spindle positioning in mitosis. Catalyzes lactylation of NBN/NBS1 in response to DNA damage, thereby promoting DNA double-strand breaks (DSBs) via homologous recombination (HR). In terms of biological role, (Microbial infection) Catalyzes the acetylation of flavivirus NS3 protein to modulate their RNA-binding and -unwinding activities leading to facilitate viral replication. The chain is Histone acetyltransferase KAT5 from Homo sapiens (Human).